The following is a 262-amino-acid chain: Ribose-5-phosphate isomerase A (262 aa).

Residues 33-36 (TGST), 89-92 (DGAD), and 102-105 (KGGG) contribute to the substrate site. Glu111 functions as the Proton acceptor in the catalytic mechanism. Lys129 is a binding site for substrate.

This sequence belongs to the ribose 5-phosphate isomerase family. As to quaternary structure, homodimer.

It carries out the reaction aldehydo-D-ribose 5-phosphate = D-ribulose 5-phosphate. Its pathway is carbohydrate degradation; pentose phosphate pathway; D-ribose 5-phosphate from D-ribulose 5-phosphate (non-oxidative stage): step 1/1. Its function is as follows. Catalyzes the reversible conversion of ribose-5-phosphate to ribulose 5-phosphate. This Ruegeria pomeroyi (strain ATCC 700808 / DSM 15171 / DSS-3) (Silicibacter pomeroyi) protein is Ribose-5-phosphate isomerase A.